Reading from the N-terminus, the 446-residue chain is Adenylosuccinate synthetase (446 aa).

GTP-binding positions include G21–K27 and G49–T51. D22 serves as the catalytic Proton acceptor. Residues D22 and G49 each coordinate Mg(2+). Residues D22–K25, N47–H50, T141, R155, Q236, T251, and R319 each bind IMP. Residue H50 is the Proton donor of the active site. V315–R321 contacts substrate. GTP-binding positions include R321, K347–D349, and S429–S431.

Belongs to the adenylosuccinate synthetase family. As to quaternary structure, homodimer. Requires Mg(2+) as cofactor.

The protein localises to the cytoplasm. It carries out the reaction IMP + L-aspartate + GTP = N(6)-(1,2-dicarboxyethyl)-AMP + GDP + phosphate + 2 H(+). The protein operates within purine metabolism; AMP biosynthesis via de novo pathway; AMP from IMP: step 1/2. In terms of biological role, plays an important role in the de novo pathway of purine nucleotide biosynthesis. Catalyzes the first committed step in the biosynthesis of AMP from IMP. The polypeptide is Adenylosuccinate synthetase (Polaromonas sp. (strain JS666 / ATCC BAA-500)).